Reading from the N-terminus, the 464-residue chain is MGLNKQDLYIYRKQYGVNLGAWFCAERWINDFLFTGEGSSELEAVSGNVKAHGIDKARENFEAHWKSWIGIEDFSYMKQHLVNSVRIPLGYWSLGNDELVKGTPFEPYAEVYRNSLHILCEKIQEAGSLSIGVLLDFHGVYGGGNCDGHSGTSSGKAEFYEKQEYQDRTVEAVKFLSSKIGQFENVIGIQVINEPIWGQYDVLANFYQKARSVVPSYLPVYIGDGWDKDHWVNWVNDHESEGFYVVDHHSYFCFGGELCHAPPKLITRRLDTGEEYGKTKLSNIVIGEWSCTLSQESWSQTKLHDKRRRDFGEAQLNQYLNYCGGCFFWTYKFLHGKGGDWDFRSVVEDKVINYPPPPPTENKAMPALLEQSRDQNFGGHCYYWDQKQHDHPYEHDLYVKGWNQAWEDYIEFLQHGAMIGFPRAWTQKRMTSISSASAWEYRDGMNAAWLHLERMGFLNPFRHP.

It belongs to the glycosyl hydrolase 5 (cellulase A) family.

It carries out the reaction Successive hydrolysis of beta-D-glucose units from the non-reducing ends of (1-&gt;3)-beta-D-glucans, releasing alpha-glucose.. This is Glucan 1,3-beta-glucosidase 3 (exg3) from Schizosaccharomyces pombe (strain 972 / ATCC 24843) (Fission yeast).